The primary structure comprises 685 residues: Protein snwA (685 aa).

4 disordered regions span residues 1–62, 88–112, 347–573, and 605–685; these read MTSL…GYLP, RKGK…TSIV, LAED…DSIY, and AVSN…SKKR. Composition is skewed to low complexity over residues 30–41 and 93–102; these read PQQQKQQQQQQQ and KSSNSNTSNM. The SNW stretch occupies residues 194 to 360; sequence ATYIKYTPSN…VRNERSGIIQ (167 aa). Residues 370–381 are compositionally biased toward acidic residues; sequence DSDNDNDNDSSS. Basic and acidic residues predominate over residues 399–494; sequence RSTERIPSRN…DRYSKRRSDS (96 aa). The segment covering 495–507 has biased composition (acidic residues); the sequence is DSDSDSDSSDSED. Basic and acidic residues predominate over residues 508-556; that stretch reads ERVRRERKEKLERDKIRMEKKRELEREYRLEASGKKSKFNRDQDRDISE. Over residues 618–631 the composition is skewed to polar residues; sequence EDNTSIQDVLSNSR. Over residues 646-685 the composition is skewed to basic and acidic residues; sequence PNKEFSGTDRSKDRTGPVAFEKEKKKSDDPFGFDDFSKKR.

The protein belongs to the SNW family. Interacts with cypE.

The protein resides in the nucleus. The protein is Protein snwA (snwA) of Dictyostelium discoideum (Social amoeba).